The primary structure comprises 568 residues: DNA ligase 2 (568 aa).

E254 lines the ATP pocket. The active-site N6-AMP-lysine intermediate is the K256. ATP-binding residues include R261, R276, E306, F346, R425, and K431.

Belongs to the ATP-dependent DNA ligase family. Mg(2+) serves as cofactor.

It catalyses the reaction ATP + (deoxyribonucleotide)n-3'-hydroxyl + 5'-phospho-(deoxyribonucleotide)m = (deoxyribonucleotide)n+m + AMP + diphosphate.. DNA ligase that seals nicks in double-stranded DNA during DNA replication, DNA recombination and DNA repair. The sequence is that of DNA ligase 2 from Methanosarcina mazei (strain ATCC BAA-159 / DSM 3647 / Goe1 / Go1 / JCM 11833 / OCM 88) (Methanosarcina frisia).